Consider the following 122-residue polypeptide: Large ribosomal subunit protein uL18 (122 aa).

The protein belongs to the universal ribosomal protein uL18 family. In terms of assembly, part of the 50S ribosomal subunit; part of the 5S rRNA/L5/L18/L25 subcomplex. Contacts the 5S and 23S rRNAs.

Its function is as follows. This is one of the proteins that bind and probably mediate the attachment of the 5S RNA into the large ribosomal subunit, where it forms part of the central protuberance. The protein is Large ribosomal subunit protein uL18 of Desulforapulum autotrophicum (strain ATCC 43914 / DSM 3382 / VKM B-1955 / HRM2) (Desulfobacterium autotrophicum).